A 363-amino-acid polypeptide reads, in one-letter code: Aminomethyltransferase (363 aa).

It belongs to the GcvT family. The glycine cleavage system is composed of four proteins: P, T, L and H.

The enzyme catalyses N(6)-[(R)-S(8)-aminomethyldihydrolipoyl]-L-lysyl-[protein] + (6S)-5,6,7,8-tetrahydrofolate = N(6)-[(R)-dihydrolipoyl]-L-lysyl-[protein] + (6R)-5,10-methylene-5,6,7,8-tetrahydrofolate + NH4(+). In terms of biological role, the glycine cleavage system catalyzes the degradation of glycine. This chain is Aminomethyltransferase, found in Thioalkalivibrio sulfidiphilus (strain HL-EbGR7).